The sequence spans 295 residues: bZIP transcription factor RISBZ5 (295 aa).

Residues 16 to 26 (REEAGAGDRKP) show a composition bias toward basic and acidic residues. Residues 16-157 (REEAGAGDRK…ARRSRRRKQA (142 aa)) form a disordered region. Residues 109–119 (SDSDSDCDSLL) show a composition bias toward acidic residues. Basic and acidic residues predominate over residues 120 to 136 (EAERSPRLRGTKSTETK). One can recognise a bZIP domain in the interval 134–197 (ETKRIRRMVS…NTAVTDNRIL (64 aa)). Residues 136–155 (KRIRRMVSNRESARRSRRRK) form a basic motif region. The interval 162-176 (LESQVEQLKGENSSL) is leucine-zipper.

In terms of assembly, homodimer.

It is found in the nucleus. Probable transcription factor that binds to the DNA specific sequence 5'-TGAGTCA-3' found in seed storage protein gene promoters. May function as a negative regulator in cold and drought stress responses. The protein is bZIP transcription factor RISBZ5 of Oryza sativa subsp. japonica (Rice).